Reading from the N-terminus, the 263-residue chain is Uracil-DNA glycosylase (263 aa).

Asp94 serves as the catalytic Proton acceptor.

This sequence belongs to the uracil-DNA glycosylase (UDG) superfamily. UNG family.

It is found in the cytoplasm. It carries out the reaction Hydrolyzes single-stranded DNA or mismatched double-stranded DNA and polynucleotides, releasing free uracil.. In terms of biological role, excises uracil residues from the DNA which can arise as a result of misincorporation of dUMP residues by DNA polymerase or due to deamination of cytosine. The polypeptide is Uracil-DNA glycosylase (Ralstonia pickettii (strain 12J)).